We begin with the raw amino-acid sequence, 621 residues long: UvrABC system protein C (621 aa).

One can recognise a GIY-YIG domain in the interval 20-106 (TQSGIYQFFD…IKSLKPKYNI (87 aa)). The 36-residue stretch at 212 to 247 (KALLKILESKMHTLSHNLQFEEAAIMRDRIQKITQM) folds into the UVR domain.

It belongs to the UvrC family. In terms of assembly, interacts with UvrB in an incision complex.

The protein localises to the cytoplasm. The UvrABC repair system catalyzes the recognition and processing of DNA lesions. UvrC both incises the 5' and 3' sides of the lesion. The N-terminal half is responsible for the 3' incision and the C-terminal half is responsible for the 5' incision. This chain is UvrABC system protein C, found in Helicobacter hepaticus (strain ATCC 51449 / 3B1).